Here is a 388-residue protein sequence, read N- to C-terminus: Succinate--CoA ligase [ADP-forming] subunit beta (388 aa).

Residues 9–244 (KQLFAEYGLP…PSQEDEREAH (236 aa)) form the ATP-grasp domain. Residues K46, 53–55 (GRG), E99, T102, and E107 each bind ATP. The Mg(2+) site is built by N199 and D213. Substrate contacts are provided by residues N264 and 321 to 323 (GIV).

The protein belongs to the succinate/malate CoA ligase beta subunit family. As to quaternary structure, heterotetramer of two alpha and two beta subunits. The cofactor is Mg(2+).

The catalysed reaction is succinate + ATP + CoA = succinyl-CoA + ADP + phosphate. The enzyme catalyses GTP + succinate + CoA = succinyl-CoA + GDP + phosphate. Its pathway is carbohydrate metabolism; tricarboxylic acid cycle; succinate from succinyl-CoA (ligase route): step 1/1. Succinyl-CoA synthetase functions in the citric acid cycle (TCA), coupling the hydrolysis of succinyl-CoA to the synthesis of either ATP or GTP and thus represents the only step of substrate-level phosphorylation in the TCA. The beta subunit provides nucleotide specificity of the enzyme and binds the substrate succinate, while the binding sites for coenzyme A and phosphate are found in the alpha subunit. The protein is Succinate--CoA ligase [ADP-forming] subunit beta of Saccharophagus degradans (strain 2-40 / ATCC 43961 / DSM 17024).